The sequence spans 196 residues: uncharacterized protein (196 aa).

Belongs to the NAD(P)H dehydrogenase (quinone) family.

This is an uncharacterized protein from Escherichia coli (strain K12).